A 252-amino-acid chain; its full sequence is Beta-crystallin B1 (252 aa).

Composition is skewed to low complexity over residues 1 to 15 (MSQAAKASASATVAV) and 24 to 37 (KGAPPAGTSPSPGT). The interval 1–42 (MSQAAKASASATVAVNPGPDTKGKGAPPAGTSPSPGTTLAPT) is disordered. An N-acetylserine modification is found at Ser-2. Residues 2 to 58 (SQAAKASASATVAVNPGPDTKGKGAPPAGTSPSPGTTLAPTTVPITSAKAAELPPGN) are N-terminal arm. 2 consecutive Beta/gamma crystallin 'Greek key' domains span residues 59–98 (YRLVVFELENFQGRRAEFSGECSNLADRGFDRVRSIIVSA) and 99–143 (GPWV…RPIK). The connecting peptide stretch occupies residues 144 to 148 (MDAQE). Beta/gamma crystallin 'Greek key' domains follow at residues 149–190 (HKIS…KVSS) and 191–233 (GTWV…RRLR). The tract at residues 235–252 (KQWHLEGSFPVLATEPPK) is C-terminal arm.

The protein belongs to the beta/gamma-crystallin family. Homo/heterodimer, or complexes of higher-order. The structure of beta-crystallin oligomers seems to be stabilized through interactions between the N-terminal arms. Specific cleavages in the N-terminal arm occur during lens maturation and give rise to truncated forms, leading to impaired oligomerization and protein insolubilization.

Crystallins are the dominant structural components of the vertebrate eye lens. The chain is Beta-crystallin B1 (CRYBB1) from Homo sapiens (Human).